Consider the following 73-residue polypeptide: MANKEELIEFEGVVTETLPNTMFRVRLENGHEVIAHISGKMRKHYIRILTGDSVKVEMTPYDLTKGRITYRAR.

The S1-like domain maps to 1–73 (MANKEELIEF…TKGRITYRAR (73 aa)).

It belongs to the IF-1 family. As to quaternary structure, component of the 30S ribosomal translation pre-initiation complex which assembles on the 30S ribosome in the order IF-2 and IF-3, IF-1 and N-formylmethionyl-tRNA(fMet); mRNA recruitment can occur at any time during PIC assembly.

It is found in the cytoplasm. Its function is as follows. One of the essential components for the initiation of protein synthesis. Stabilizes the binding of IF-2 and IF-3 on the 30S subunit to which N-formylmethionyl-tRNA(fMet) subsequently binds. Helps modulate mRNA selection, yielding the 30S pre-initiation complex (PIC). Upon addition of the 50S ribosomal subunit IF-1, IF-2 and IF-3 are released leaving the mature 70S translation initiation complex. The sequence is that of Translation initiation factor IF-1 from Acinetobacter baumannii (strain ATCC 17978 / DSM 105126 / CIP 53.77 / LMG 1025 / NCDC KC755 / 5377).